Consider the following 229-residue polypeptide: Adenylate kinase (229 aa).

Residues 1–9 constitute a propeptide that is removed on maturation; that stretch reads MLSTLAKRF. ATP is bound at residue 25 to 30; that stretch reads GVGKGT. The segment at 45–74 is NMP; the sequence is STGDALRAEIRGQTPLGKRVKGIIESGGLV. AMP-binding positions include threonine 46, arginine 51, 72–74, 100–103, and glutamine 107; these read GLV and GIPR. Positions 141–178 are LID; it reads GRLFHPGSGRVYHKVTNPPKKPMTDDITGEPLIIRKDD. Arginine 142 lines the ATP pocket. Residues arginine 175 and arginine 186 each coordinate AMP. Residue glycine 214 coordinates ATP.

The protein belongs to the adenylate kinase family.

The protein resides in the hydrogenosome. It carries out the reaction AMP + ATP = 2 ADP. Functionally, catalyzes the reversible transfer of the terminal phosphate group between ATP and AMP. Plays an important role in cellular energy homeostasis and in adenine nucleotide metabolism. This chain is Adenylate kinase, found in Trichomonas vaginalis.